The primary structure comprises 37 residues: Cytochrome b6-f complex subunit 7 (37 aa).

Residues 5–25 traverse the membrane as a helical segment; the sequence is IFGTAFLFIVLVPVGLALGAF.

This sequence belongs to the PetM family. In terms of assembly, the 4 large subunits of the cytochrome b6-f complex are cytochrome b6, subunit IV (17 kDa polypeptide, PetD), cytochrome f and the Rieske protein, while the 4 small subunits are PetG, PetL, PetM and PetN. The complex functions as a dimer.

The protein localises to the cellular thylakoid membrane. Component of the cytochrome b6-f complex, which mediates electron transfer between photosystem II (PSII) and photosystem I (PSI), cyclic electron flow around PSI, and state transitions. This is Cytochrome b6-f complex subunit 7 from Synechococcus elongatus (strain ATCC 33912 / PCC 7942 / FACHB-805) (Anacystis nidulans R2).